The following is a 175-amino-acid chain: dATP triphosphohydrolase (175 aa).

Position 19 (Arg-19) interacts with dATP. Residues His-34, His-66, Asp-67, Glu-70, Asp-75, and Asp-119 each contribute to the Co(2+) site.

It belongs to the Caudovirales dATP triphosphohydrolase family. In terms of assembly, homohexamer. It depends on Co(2+) as a cofactor. Zn(2+) serves as cofactor.

It carries out the reaction dATP + H2O = 2'-deoxyadenosine + triphosphate + H(+). The catalysed reaction is dADP + H2O = 2'-deoxyadenosine + diphosphate. The enzyme catalyses dAMP + H2O = 2'-deoxyadenosine + phosphate. In terms of biological role, catalyzes the hydrolysis of dATP, dADP and dAMP into dA. This step is essential for Z-genome synthesis (containing aminoadenine instead of adenine). Specifically removes dATP and its precursor dADP from the nucleotide pool of the host, preventing the incorporation of A into the phage genome and favoring the integration of the Z-base into the viral genome. This Cyanophage S-2L (Cyanobacteria phage S-2L) protein is dATP triphosphohydrolase (datZ).